A 172-amino-acid chain; its full sequence is Lytic chitin monooxygenase (172 aa).

The N-terminal stretch at Met1–Ala30 is a signal peptide. Cu cation contacts are provided by His31 and His106. In terms of domain architecture, Chitin-binding type-4 spans His31–Val168.

Requires Cu(2+) as cofactor.

It localises to the secreted. The enzyme catalyses [(1-&gt;4)-N-acetyl-beta-D-glucosaminyl]n+m + reduced acceptor + O2 = [(1-&gt;4)-N-acetyl-beta-D-glucosaminyl]m-1-(1-&gt;4)-2-(acetylamino)-2-deoxy-D-glucono-1,5-lactone + [(1-&gt;4)-N-acetyl-beta-D-glucosaminyl]n + acceptor + H2O.. The protein operates within glycan degradation; chitin degradation. In terms of biological role, involved in chitin degradation. Catalyzes the oxidative cleavage of glycosidic bonds in chitin via a copper-dependent mechanism, leading to oxidized chitooligomers with degrees of polymerization of 4-6. Is not active on cellulose. This is Lytic chitin monooxygenase from Streptomyces ambofaciens (strain ATCC 23877 / 3486 / DSM 40053 / JCM 4204 / NBRC 12836 / NRRL B-2516).